A 766-amino-acid polypeptide reads, in one-letter code: Oligopeptide transporter 7 (766 aa).

The disordered stretch occupies residues Met1–Arg58. The segment covering Asp45–Asn54 has biased composition (acidic residues). A run of 15 helical transmembrane segments spans residues Met79–Tyr99, Leu104–Ala124, Ile154–Val174, Phe184–Ile204, Phe247–Ile267, Ile287–Ser307, Val324–Val344, Leu390–Met410, Val446–Cys466, Trp477–Ile497, Ile509–Phe529, Phe561–Trp581, Leu627–Leu647, Ala676–Phe696, and Val709–Leu729.

It belongs to the oligopeptide OPT transporter (TC 2.A.67.1) family. Expressed in the major and the first-order veins and in the hydathodes of the leaves. In the roots, expressed in circular zones surrounding lateral root primordia and in some part of the root epidermis. Expressed also in the sepals and the cortical tissues of the stem, but not in the conducting bundles, the petals or the reproductive tissues.

The protein localises to the membrane. Involved in the translocation of tetra- and pentapeptides across the cellular membrane in an energy-dependent manner. May also transport cadmium complexes. The sequence is that of Oligopeptide transporter 7 (OPT7) from Arabidopsis thaliana (Mouse-ear cress).